The following is a 98-amino-acid chain: Small ribosomal subunit protein bS6 (98 aa).

It belongs to the bacterial ribosomal protein bS6 family.

Binds together with bS18 to 16S ribosomal RNA. This chain is Small ribosomal subunit protein bS6, found in Lactobacillus acidophilus (strain ATCC 700396 / NCK56 / N2 / NCFM).